The following is a 198-amino-acid chain: CASP-like protein 1U1 (198 aa).

Residues 1–30 (MSDTPVVVIPRKGYVDGHHGYHHSYHSGLN) are Cytoplasmic-facing. Residues 31–51 (LLLRLLQAFATAAAVIVMLLA) traverse the membrane as a helical segment. The Extracellular portion of the chain corresponds to 52–73 (TQTEFTRYGEVRGRWRDYPAYK). A helical transmembrane segment spans residues 74 to 94 (WFIIANAVVFVYALLATLVAC). The Cytoplasmic portion of the chain corresponds to 95–117 (CALIARRGPLSYSPSAWLTFLLD). The chain crosses the membrane as a helical span at residues 118 to 138 (FVAASALMSAASAALAVALIA). Residues 139-165 (RNGQNLQGQHYWPTFCNYVTRFCDYAQ) lie on the Extracellular side of the membrane. Residues 166–186 (GAIIASFCGFGLLALSTLLAA) form a helical membrane-spanning segment. Residues 187–198 (SALHHLAWHRLH) lie on the Cytoplasmic side of the membrane.

It belongs to the Casparian strip membrane proteins (CASP) family. As to quaternary structure, homodimer and heterodimers.

It is found in the cell membrane. The protein is CASP-like protein 1U1 of Physcomitrium patens (Spreading-leaved earth moss).